Reading from the N-terminus, the 111-residue chain is uncharacterized protein (111 aa).

Residues 18–41 (FFYFFFISFYTLWIVFFLLHLSFF) form a helical membrane-spanning segment.

The protein resides in the membrane. This is an uncharacterized protein from Saccharomyces cerevisiae (strain ATCC 204508 / S288c) (Baker's yeast).